A 624-amino-acid polypeptide reads, in one-letter code: PTS system mannitol-specific EIICBA component (624 aa).

Positions 13–336 (FGRFLSNMVM…SFVIASFFLK (324 aa)) constitute a PTS EIIC type-2 domain. The next 6 membrane-spanning stretches (helical) occupy residues 25-46 (IGAFIAWGFITALFIPTGWLPN), 51-71 (KLVGPMITYLLPLLIGYSGGK), 135-156 (SSGIIGMILAILFFWLIGPAVK), 166-186 (VDILVKAHLLPLTSIFVEPAK), 274-293 (VIAGGVSGVFTLVLFNAGLV), and 314-335 (VGVLASVAIAATVSFVIASFFL). A PTS EIIB type-2 domain is found at 372 to 463 (QKIFVACDAG…LVQDLSNTKV (92 aa)). Residue Cys378 is the Phosphocysteine intermediate; for EIIB activity of the active site. Residue Cys378 is modified to Phosphocysteine; by EIIA. The PTS EIIA type-2 domain maps to 482–624 (FVLTEKQVFL…VEKVLALLKA (143 aa)). The Tele-phosphohistidine intermediate; for EIIA activity role is filled by His542. His542 carries the post-translational modification Phosphohistidine; by HPr.

As to quaternary structure, homodimer. An intramolecular phosphotransfer takes places between His-542 and Cys-378.

It is found in the cell inner membrane. The enzyme catalyses D-mannitol(out) + N(pros)-phospho-L-histidyl-[protein] = D-mannitol 1-phosphate(in) + L-histidyl-[protein]. Functionally, the phosphoenolpyruvate-dependent sugar phosphotransferase system (sugar PTS), a major carbohydrate active transport system, catalyzes the phosphorylation of incoming sugar substrates concomitantly with their translocation across the cell membrane. This system is involved in D-mannitol transport. The sequence is that of PTS system mannitol-specific EIICBA component (mtlA) from Pasteurella multocida (strain Pm70).